Consider the following 133-residue polypeptide: MDVSRLLLATLLVCLCFLTAYSHLAPEEKPRDERNLKNNSSMNLLDFPSVSIVALNKKSKKISRNEAEKKKRPSKRKAPMKNVARTRPPPPTPCVATRDSCKPPAPACCDPCAFCQCRFFRSACSCRVLNPTC.

The N-terminal stretch at 1–22 (MDVSRLLLATLLVCLCFLTAYS) is a signal peptide. N-linked (GlcNAc...) asparagine glycosylation occurs at asparagine 39. Residues 56 to 95 (NKKSKKISRNEAEKKKRPSKRKAPMKNVARTRPPPPTPCV) are disordered. The span at 70–79 (KKRPSKRKAP) shows a compositional bias: basic residues. Disulfide bonds link cysteine 94–cysteine 109, cysteine 101–cysteine 115, cysteine 108–cysteine 126, cysteine 112–cysteine 133, and cysteine 117–cysteine 124. One can recognise an Agouti domain in the interval 94 to 133 (CVATRDSCKPPAPACCDPCAFCQCRFFRSACSCRVLNPTC).

The protein localises to the secreted. Its function is as follows. Involved in the regulation of melanogenesis. The binding of ASP to MC1R precludes alpha-MSH initiated signaling and thus blocks production of cAMP, leading to a down-regulation of eumelanogenesis (brown/black pigment) and thus increasing synthesis of pheomelanin (yellow/red pigment). In Bos taurus (Bovine), this protein is Agouti-signaling protein (ASIP).